Here is a 214-residue protein sequence, read N- to C-terminus: Protein-L-isoaspartate O-methyltransferase (214 aa).

The active site involves Ser63.

It belongs to the methyltransferase superfamily. L-isoaspartyl/D-aspartyl protein methyltransferase family.

Its subcellular location is the cytoplasm. It carries out the reaction [protein]-L-isoaspartate + S-adenosyl-L-methionine = [protein]-L-isoaspartate alpha-methyl ester + S-adenosyl-L-homocysteine. In terms of biological role, catalyzes the methyl esterification of L-isoaspartyl residues in peptides and proteins that result from spontaneous decomposition of normal L-aspartyl and L-asparaginyl residues. It plays a role in the repair and/or degradation of damaged proteins. The polypeptide is Protein-L-isoaspartate O-methyltransferase (Maridesulfovibrio salexigens (strain ATCC 14822 / DSM 2638 / NCIMB 8403 / VKM B-1763) (Desulfovibrio salexigens)).